Consider the following 176-residue polypeptide: Ribosome maturation factor RimM (176 aa).

In terms of domain architecture, PRC barrel spans 97–176 (DNDFYHRDLI…QIVVDWDPDF (80 aa)).

This sequence belongs to the RimM family. Binds ribosomal protein uS19.

It localises to the cytoplasm. Functionally, an accessory protein needed during the final step in the assembly of 30S ribosomal subunit, possibly for assembly of the head region. Essential for efficient processing of 16S rRNA. May be needed both before and after RbfA during the maturation of 16S rRNA. It has affinity for free ribosomal 30S subunits but not for 70S ribosomes. The polypeptide is Ribosome maturation factor RimM (Shewanella denitrificans (strain OS217 / ATCC BAA-1090 / DSM 15013)).